The sequence spans 228 residues: Eukaryotic translation initiation factor 4E-1 (228 aa).

A compositionally biased stretch (basic and acidic residues) spans 1–19 (MATAEMEKTTTFDEAEKVK). The tract at residues 1 to 33 (MATAEMEKTTTFDEAEKVKLNANEADDEVEEGE) is disordered. Over residues 24 to 33 (EADDEVEEGE) the composition is skewed to acidic residues. EIF4G-binding stretches follow at residues 53–56 (HPLE) and 63–99 (FDNPVAKSKQAAWGSSLRNVYTFSTVEDFWGAYNNIH). Residues 71-76 (KQAAWG), lysine 103, and 121-122 (WE) contribute to the mRNA site. The cysteines at positions 126 and 164 are disulfide-linked. Residues 147-156 (YTLLAMIGHQ) are EIF4G-binding. MRNA is bound by residues 171-176 (RGKGEK) and 216-220 (KRLDR).

This sequence belongs to the eukaryotic initiation factor 4E family. EIF4F is a multi-subunit complex, the composition of which varies with external and internal environmental conditions. It is composed of at least EIF4A, EIF4E and EIF4G. EIF4E is also known to interact with other partners. In higher plants two isoforms of EIF4F have been identified, named isoform EIF4F and isoform EIF(iso)4F. Isoform EIF4F has subunits p220 and p26, whereas isoform EIF(iso)4F has subunits p82 and p28. In terms of assembly, (Microbial infection) Interacts with potyvirus viral genome-linked protein (VPg); this interaction is possible in susceptible hosts but is impaired in resistant plants. Thus the VPg of tobacco etch virus (TEV) strain HAT interacts with susceptible alleles pvr2(+), pvr2(3) and pvr2(9) but not with the resistant allele pvr2(2), the VPg of TEV strain CAA10 interacts with susceptible alleles pvr2(+), pvr2(2), pvr2(3) and pvr2(9), the VPg of potato virus Y (PVY) strain LYE84 interacts with tomato eIF4E1 and eIF4E2 as well as with the Capsicum annuum eIF4E1 susceptible allele pvr2(+) but not with resistant alleles pvr2(1), pvr2(2), pvr2(3), pvr2(4), pvr2(5), pvr2(6), pvr2(7), pvr2(8) and pvr2(9) and the VPg of PVY strain SON41 interacts with C.annuum eIF4E1 susceptible alleles pvr2(+), pvr2(1), pvr2(2), pvr2(3) and pvr2(4) but not with resistant alleles pvr2(5), pvr2(6), pvr2(7), pvr2(8) and pvr2(9). In addition, the susceptible allele pvr1(+) interacts strongly with TEV strains HAT and NW VPg while resistance alleles (pvr1, pvr1(1), and pvr1(2)) fail to bind TEV VPg. In terms of processing, according to the redox status, the Cys-126-Cys-164 disulfide bridge may have a role in regulating protein function by affecting its ability to bind capped mRNA.

The protein localises to the nucleus. It localises to the cytoplasm. Its function is as follows. Component of the protein complex eIF4F, which is involved in the recognition of the mRNA cap, ATP-dependent unwinding of 5'-terminal secondary structure and recruitment of mRNA to the ribosome. Recognizes and binds the 7-methylguanosine-containing mRNA cap during an early step in the initiation of protein synthesis and facilitates ribosome binding by inducing the unwinding of the mRNAs secondary structures. Key component of recessive resistance to potyviruses. (Microbial infection) Susceptibility host factor required for viral infection (e.g. potato virus Y (PVY) and tobacco etch virus (TEV)) by recruiting viral RNAs to the host ribosomal complex via an interaction with viral genome-linked protein (VPg). The polypeptide is Eukaryotic translation initiation factor 4E-1 (Capsicum annuum (Capsicum pepper)).